Consider the following 257-residue polypeptide: NAD-capped RNA hydrolase NudC (257 aa).

R69 contributes to the substrate binding site. Positions 98 and 101 each coordinate Zn(2+). E111 contacts substrate. 2 residues coordinate Zn(2+): C116 and C119. Residue Y124 participates in substrate binding. The Nudix hydrolase domain maps to 125–248 (PQIAPCIIVA…TVARRLIEDT (124 aa)). Residues A158, E174, and E178 each contribute to the a divalent metal cation site. Positions 159–180 (GFVEVGETLEQAVAREVMEESG) match the Nudix box motif. A substrate-binding site is contributed by 192–199 (QPWPFPQS). E219 contributes to the a divalent metal cation binding site. A241 contacts substrate.

This sequence belongs to the Nudix hydrolase family. NudC subfamily. Homodimer. It depends on Mg(2+) as a cofactor. Mn(2+) serves as cofactor. Requires Zn(2+) as cofactor.

It catalyses the reaction a 5'-end NAD(+)-phospho-ribonucleoside in mRNA + H2O = a 5'-end phospho-adenosine-phospho-ribonucleoside in mRNA + beta-nicotinamide D-ribonucleotide + 2 H(+). The enzyme catalyses NAD(+) + H2O = beta-nicotinamide D-ribonucleotide + AMP + 2 H(+). The catalysed reaction is NADH + H2O = reduced beta-nicotinamide D-ribonucleotide + AMP + 2 H(+). In terms of biological role, mRNA decapping enzyme that specifically removes the nicotinamide adenine dinucleotide (NAD) cap from a subset of mRNAs by hydrolyzing the diphosphate linkage to produce nicotinamide mononucleotide (NMN) and 5' monophosphate mRNA. The NAD-cap is present at the 5'-end of some mRNAs and stabilizes RNA against 5'-processing. Has preference for mRNAs with a 5'-end purine. Catalyzes the hydrolysis of a broad range of dinucleotide pyrophosphates. The protein is NAD-capped RNA hydrolase NudC of Salmonella dublin (strain CT_02021853).